A 481-amino-acid polypeptide reads, in one-letter code: Glycogen synthase (481 aa).

Lys-16 contributes to the ADP-alpha-D-glucose binding site.

It belongs to the glycosyltransferase 1 family. Bacterial/plant glycogen synthase subfamily.

It catalyses the reaction [(1-&gt;4)-alpha-D-glucosyl](n) + ADP-alpha-D-glucose = [(1-&gt;4)-alpha-D-glucosyl](n+1) + ADP + H(+). It functions in the pathway glycan biosynthesis; glycogen biosynthesis. Synthesizes alpha-1,4-glucan chains using ADP-glucose. The protein is Glycogen synthase of Cellvibrio japonicus (strain Ueda107) (Pseudomonas fluorescens subsp. cellulosa).